A 363-amino-acid chain; its full sequence is Forkhead box protein I1 (363 aa).

Residues 1–18 (MNPVQQPAQQRSPASSLP) show a composition bias toward low complexity. Disordered regions lie at residues 1 to 24 (MNPV…KRAQ), 210 to 269 (DNGN…SPPA), and 344 to 363 (TTAQ…QGRY). A DNA-binding region (fork-head) is located at residues 125–219 (RPPYSYSALI…DNGNFRRKRK (95 aa)). The segment covering 231 to 243 (KIGEDHLNPKGKE) has biased composition (basic and acidic residues). 2 stretches are compositionally biased toward low complexity: residues 244–258 (SPPM…EPSP) and 347–363 (QKQP…QGRY).

The protein resides in the nucleus. Transcription factor. Essential for ventral specification of the early cephalic (head) ectoderm during gastrulation, playing a role in the 'non-neural' versus 'neural' cell fate choice. Binds to DNA via the target sequence 5'-[AG]TAAA[CT]A-3', with 5'-ATAAACA-3' being the preferred binding site. This is Forkhead box protein I1 from Xenopus tropicalis (Western clawed frog).